Consider the following 165-residue polypeptide: MRMADHFEETTMGTFLADYYLWTKSLHVISVLAWMAGLFYLPRLFVYHAEVVKAGTETDALFQTMERRLLRAIMNPAMIATWIFGLLLVFTPGIVDWSMLWPWTKAACVLAMTGFHMWLAARRRDFAAGANRHKGRTYRMMNELPTLLMLVIVFSAVAKWNYWGF.

The next 4 membrane-spanning stretches (helical) occupy residues 26–46 (LHVISVLAWMAGLFYLPRLFV), 77–97 (AMIATWIFGLLLVFTPGIVDW), 99–119 (MLWPWTKAACVLAMTGFHMWL), and 145–165 (PTLLMLVIVFSAVAKWNYWGF). His-27 serves as a coordination point for heme. Lys-105 contributes to the heme binding site.

The protein belongs to the HemJ family. In terms of assembly, homodimer. Heme b serves as cofactor.

It localises to the cell membrane. It catalyses the reaction protoporphyrinogen IX + 3 A = protoporphyrin IX + 3 AH2. Its pathway is porphyrin-containing compound metabolism; protoporphyrin-IX biosynthesis; protoporphyrin-IX from protoporphyrinogen-IX: step 1/1. Catalyzes the oxidation of protoporphyrinogen IX to protoporphyrin IX. Is involved in the biosynthesis of tetrapyrrole molecules like heme and chlorophyll. Does not use oxygen or artificial electron acceptors such as menadione or benzoquinone. The chain is Protoporphyrinogen IX oxidase from Cereibacter sphaeroides (strain ATCC 17023 / DSM 158 / JCM 6121 / CCUG 31486 / LMG 2827 / NBRC 12203 / NCIMB 8253 / ATH 2.4.1.) (Rhodobacter sphaeroides).